The chain runs to 510 residues: 2,3-bisphosphoglycerate-independent phosphoglycerate mutase (510 aa).

Positions 13 and 63 each coordinate Mn(2+). The active-site Phosphoserine intermediate is Ser63. Substrate contacts are provided by residues His124, Arg154–Asp155, Arg186, Arg192, Arg262–Arg265, and Lys334. 5 residues coordinate Mn(2+): Asp401, His405, Asp442, His443, and His461.

Belongs to the BPG-independent phosphoglycerate mutase family. In terms of assembly, monomer. The cofactor is Mn(2+).

The catalysed reaction is (2R)-2-phosphoglycerate = (2R)-3-phosphoglycerate. The protein operates within carbohydrate degradation; glycolysis; pyruvate from D-glyceraldehyde 3-phosphate: step 3/5. In terms of biological role, catalyzes the interconversion of 2-phosphoglycerate and 3-phosphoglycerate. The chain is 2,3-bisphosphoglycerate-independent phosphoglycerate mutase from Vibrio campbellii (strain ATCC BAA-1116).